We begin with the raw amino-acid sequence, 408 residues long: Multidrug resistance protein MdtG (408 aa).

Transmembrane regions (helical) follow at residues 16-36, 58-78, 92-112, 115-135, 146-166, 173-193, 224-244, 253-273, 290-310, 319-339, and 378-398; these read LIVA…VMPF, IVFS…GGLA, LGMG…QFLI, ALLG…ATQV, TLST…GLLA, PVFF…LLCI, LFVT…ILTL, VGNI…AALL, ILIA…FVQT, FLLG…LVYN, and AVFL…WNSL.

It belongs to the major facilitator superfamily. DHA1 family. MdtG (TC 2.A.1.2.20) subfamily.

The protein resides in the cell inner membrane. In terms of biological role, confers resistance to fosfomycin and deoxycholate. This chain is Multidrug resistance protein MdtG, found in Escherichia fergusonii (strain ATCC 35469 / DSM 13698 / CCUG 18766 / IAM 14443 / JCM 21226 / LMG 7866 / NBRC 102419 / NCTC 12128 / CDC 0568-73).